A 596-amino-acid polypeptide reads, in one-letter code: MSTFNFASMAAQLGQEQGISFENKVLSWNTAADVQDVVDALNKQTTVHYLNLDGNTLGVEAAKAIGEGLKRHPEFRKALWKNMFTGRLISEIPEALKHLGAALIVAGAKLTVLDLSDNALGPNGMRGLEELLRSPVCYSLQELLLCNCGLGPEGGSMLSRALIDLHANANKAGFPLQLRVFIGSRNRLEDAGATEMATAFQTLKTFEEIVLEQNSIYIEGVEALAESFKHNPHLRVLNMNDNTLKSEGAEKIAEALPFLPLLREMSFGDCLIKTNGAYHFGEALERGNERLEVIDLGFNEINSDGGLVLVNAMGNKPKLRILNLDGNSFGEEGSEKIISEMSKLPTAAALQPFQHQEEEDLEDEYQADKQDADYEEEEEVHEHANDTTEEADEDSEGDEDDEEDEGDEEYSNVAEETAYVTTNAYTTKLFNDTTNSMASETFAVANKTISQKCTPEKFCLSQKPCSQEDFDSLDMDNKLEALQSIVNQFTGDNHLLLLVFTTLKCAHLSQSSKAALDLAVSLYQATFDYAIKTKQETRVLNYVLMQLRLLPCKEVFHSDYDVKNCRFALREALKQPTFANDNIKNSFKTFLEGAES.

6 LRR repeats span residues 44-71, 107-134, 137-164, 203-230, 231-258, and 259-286; these read QTTV…GLKR, GAKL…LLRS, CYSL…ALID, LKTF…SFKH, NPHL…ALPF, and LPLL…ALER. A disordered region spans residues 355 to 418; it reads HQEEEDLEDE…EYSNVAEETA (64 aa). Residues 387–410 show a composition bias toward acidic residues; it reads TTEEADEDSEGDEDDEEDEGDEEY. A phosphothreonine mark is found at T433 and T434. S436 carries the phosphoserine modification.

It belongs to the RNA1 family. In terms of assembly, forms a complex with Nup358/RanBP2, sbr/Nxf1 and Nxt1. Associates with the nuclear pore complex via its interaction with Nup358/RanBP2. Both full-length and truncated protein are expressed in testis (at protein level). Expressed in oocytes and nurse cells (at protein level).

Its subcellular location is the cytoplasm. The protein localises to the nucleus membrane. GTPase activator for the nuclear Ras-related regulatory protein Ran, converting it to the putatively inactive GDP-bound state. Trans-acting factor necessary for meiotic distortion. Distortion is only seen in individuals that carry the RanGAP tandem duplication and express a RanGAP truncated protein. Binding of truncated RanGAP product to the Responder(RSP) locus initiates events that lead to sperm dysfunction. During oogenesis, plays a role in the biogenesis of annulate lamellae containing nuclear pore complex components. The protein is Ran GTPase-activating protein (RanGAP) of Drosophila melanogaster (Fruit fly).